The following is a 56-amino-acid chain: Hemolymph trypsin inhibitor A (56 aa).

The region spanning 22-56 is the BPTI/Kunitz inhibitor domain; that stretch reads CFLPLEVGVCRALFFRYGYDPAIKACXEFMYGGCQ. Cysteine 31 and cysteine 55 form a disulfide bridge.

Inhibits trypsin. The chain is Hemolymph trypsin inhibitor A from Manduca sexta (Tobacco hawkmoth).